The sequence spans 150 residues: Transthyretin (150 aa).

Positions 1–20 (MAFHSTLLVFLAGLVFLSEA) are cleaved as a signal peptide. A Sulfocysteine modification is found at Cys-33. L-thyroxine is bound by residues Lys-38, Glu-77, and Ser-140.

This sequence belongs to the transthyretin family. In terms of assembly, homotetramer. Dimer of dimers. In the homotetramer, subunits assemble around a central channel that can accommodate two ligand molecules. Sulfonation of the reactive cysteine Cys-33 enhances the stability of the native conformation of TTR, avoiding misassembly of the protein leading to amyloid formation. As to expression, detected in serum (at protein level). Detected in liver and choroid plexus.

The protein localises to the secreted. Its function is as follows. Thyroid hormone-binding protein. Probably transports thyroxine from the bloodstream to the brain. The protein is Transthyretin (TTR) of Gallus gallus (Chicken).